We begin with the raw amino-acid sequence, 252 residues long: Imidazole glycerol phosphate synthase subunit HisF (252 aa).

Residues Asp11 and Asp130 contribute to the active site.

The protein belongs to the HisA/HisF family. Heterodimer of HisH and HisF.

The protein localises to the cytoplasm. The catalysed reaction is 5-[(5-phospho-1-deoxy-D-ribulos-1-ylimino)methylamino]-1-(5-phospho-beta-D-ribosyl)imidazole-4-carboxamide + L-glutamine = D-erythro-1-(imidazol-4-yl)glycerol 3-phosphate + 5-amino-1-(5-phospho-beta-D-ribosyl)imidazole-4-carboxamide + L-glutamate + H(+). Its pathway is amino-acid biosynthesis; L-histidine biosynthesis; L-histidine from 5-phospho-alpha-D-ribose 1-diphosphate: step 5/9. Its function is as follows. IGPS catalyzes the conversion of PRFAR and glutamine to IGP, AICAR and glutamate. The HisF subunit catalyzes the cyclization activity that produces IGP and AICAR from PRFAR using the ammonia provided by the HisH subunit. The sequence is that of Imidazole glycerol phosphate synthase subunit HisF from Syntrophomonas wolfei subsp. wolfei (strain DSM 2245B / Goettingen).